A 55-amino-acid chain; its full sequence is Large ribosomal subunit protein bL32 (55 aa).

Positions 1–28 are disordered; that stretch reads MAVQQNKPTRSKRGMRRSHDALTTATLS.

It belongs to the bacterial ribosomal protein bL32 family.

The protein is Large ribosomal subunit protein bL32 of Serratia proteamaculans (strain 568).